Reading from the N-terminus, the 309-residue chain is MNKLTIVGAGLVGEAAAQIIARDELCRELVLMDVQGELAQGKALDVWQAAVESGSDTRVYGGAKAEMLDGSDLVVITAGVPRKPGQSRQDVLSINLPILDGIMTDIKHHAPAATVLVVSNPVDVLTYRAWSVSGLGRDKVFGQAGVLDTARMKCFIAEQTGFSAKDITALVLGGHGDSMVPLMRYCQIGSVPLSHFLSSEQIEQIVERTRKGGGEILGLKKMGSACDAPGVAIAQMVDAIANGRNRILPAVAILQGEYGRKDIAMGVPCVLADEGLARVIELPLDAQEQAMFDQSADQVARDIDEMKAL.

NAD(+) is bound by residues 8–13 and D33; that span reads GAGLVG. Substrate is bound by residues R82 and R88. NAD(+) is bound by residues N95 and 118–120; that span reads VSN. Residues N120 and R151 each contribute to the substrate site. The active-site Proton acceptor is the H175.

It belongs to the LDH/MDH superfamily. MDH type 3 family.

It catalyses the reaction (S)-malate + NAD(+) = oxaloacetate + NADH + H(+). Catalyzes the reversible oxidation of malate to oxaloacetate. The protein is Malate dehydrogenase of Pseudomonas putida (strain GB-1).